Reading from the N-terminus, the 382-residue chain is Membrane protein MLC1 (382 aa).

The span at 1 to 28 (MTREGQFREELGYDRMPTLERGRQDAGR) shows a compositional bias: basic and acidic residues. The disordered stretch occupies residues 1-43 (MTREGQFREELGYDRMPTLERGRQDAGRQDPGSYTPDSKPKDL). 4 consecutive transmembrane segments (helical) span residues 58 to 78 (WVFS…SLYL), 88 to 107 (YLRC…FAVG), 117 to 137 (FQIL…WFGC), and 148 to 168 (INFN…TVII). 3 positions are modified to phosphoserine: Ser183, Ser185, and Ser188. The next 4 helical transmembrane spans lie at 205-225 (SVVE…ALNV), 234-254 (LSVT…ASHV), 263-283 (LVEV…TASG), and 309-329 (LLLL…GTAI).

As to quaternary structure, interacts with ATP1B1. Part of a complex containing ATP1B1, TRPV4, AQP4 and HEPACAM.

The protein localises to the membrane. Its subcellular location is the cell membrane. It localises to the cytoplasm. The protein resides in the perinuclear region. It is found in the endoplasmic reticulum. Its function is as follows. Transmembrane protein mainly expressed in brain astrocytes that may play a role in transport across the blood-brain and brain-cerebrospinal fluid barriers. Regulates the response of astrocytes to hypo-osmosis by promoting calcium influx. May function as regulatory protein of membrane protein complexes such as ion channels. The polypeptide is Membrane protein MLC1 (Mus musculus (Mouse)).